The chain runs to 842 residues: Translation initiation factor IF-2 (842 aa).

2 disordered regions span residues 42–91 (ETKR…NLSS) and 139–253 (LQKQ…NQEP). Composition is skewed to basic and acidic residues over residues 176-190 (IEKRKIDENQEEERH) and 199-214 (SEIRAPKIVKGADERR). Residues 340-509 (PRPPVVTIMG…LLQAEMLDLK (170 aa)) form the tr-type G domain. Residues 349–356 (GHVDHGKT) form a G1 region. 349–356 (GHVDHGKT) contacts GTP. A G2 region spans residues 374-378 (GITQH). The G3 stretch occupies residues 395–398 (DTPG). Residues 395–399 (DTPGH) and 449–452 (NKID) each bind GTP. Residues 449-452 (NKID) form a G4 region. The interval 485–487 (SAK) is G5.

The protein belongs to the TRAFAC class translation factor GTPase superfamily. Classic translation factor GTPase family. IF-2 subfamily.

The protein resides in the cytoplasm. Functionally, one of the essential components for the initiation of protein synthesis. Protects formylmethionyl-tRNA from spontaneous hydrolysis and promotes its binding to the 30S ribosomal subunits. Also involved in the hydrolysis of GTP during the formation of the 70S ribosomal complex. This is Translation initiation factor IF-2 from Bartonella tribocorum (strain CIP 105476 / IBS 506).